A 197-amino-acid chain; its full sequence is ATP-dependent Clp protease proteolytic subunit 2 (197 aa).

The Nucleophile role is filled by S96. Residue H121 is part of the active site.

It belongs to the peptidase S14 family. Fourteen ClpP subunits assemble into 2 heptameric rings which stack back to back to give a disk-like structure with a central cavity, resembling the structure of eukaryotic proteasomes.

It is found in the cytoplasm. The enzyme catalyses Hydrolysis of proteins to small peptides in the presence of ATP and magnesium. alpha-casein is the usual test substrate. In the absence of ATP, only oligopeptides shorter than five residues are hydrolyzed (such as succinyl-Leu-Tyr-|-NHMec, and Leu-Tyr-Leu-|-Tyr-Trp, in which cleavage of the -Tyr-|-Leu- and -Tyr-|-Trp bonds also occurs).. Its function is as follows. Cleaves peptides in various proteins in a process that requires ATP hydrolysis. Has a chymotrypsin-like activity. Plays a major role in the degradation of misfolded proteins. The sequence is that of ATP-dependent Clp protease proteolytic subunit 2 from Parasynechococcus marenigrum (strain WH8102).